The chain runs to 211 residues: Large ribosomal subunit protein uL4 (211 aa).

Disordered regions lie at residues 1–28 (MAQA…ETEP) and 48–99 (TAST…GPRY). Positions 10-28 (RTGRRSEMELKGPRFETEP) are enriched in basic and acidic residues.

It belongs to the universal ribosomal protein uL4 family. In terms of assembly, part of the 50S ribosomal subunit.

One of the primary rRNA binding proteins, this protein initially binds near the 5'-end of the 23S rRNA. It is important during the early stages of 50S assembly. It makes multiple contacts with different domains of the 23S rRNA in the assembled 50S subunit and ribosome. Its function is as follows. Forms part of the polypeptide exit tunnel. In Rubrobacter xylanophilus (strain DSM 9941 / JCM 11954 / NBRC 16129 / PRD-1), this protein is Large ribosomal subunit protein uL4.